Consider the following 1930-residue polypeptide: Ankyrin repeat domain-containing protein SAT10 (1930 aa).

ANK repeat units lie at residues 840-872, 878-908, 920-949, 959-989, 993-1023, 1073-1102, 1106-1135, 1144-1174, 1178-1205, 1206-1235, 1239-1268, 1272-1301, 1304-1333, 1339-1368, 1400-1429, 1514-1543, 1548-1577, 1615-1644, 1651-1680, and 1696-1724; these read FRHTPLGVATAYGDADVIDLLINHDISWWDLEE, GTWNALHHAALGGQRNIMCKLLLQQRKGVLN, SGNTPLILAASRGFHKIVALLLEDGSMRGY, QRSSALLAAARYGFSQTLEMLLTYEGIDYSK, NGASILHLALVNDREAAALQILAHKDIFSNE, SGLTSLTIAIWRNLKSIVEILIAMDADANG, EFEAPLVAAAEVGSFELFTMFTKIGATKTE, GRTRPLHAACAMGHLEVVRELLKDSVTQLSH, NQRTPLCAAISRDQNHVISVLLDRETET, GLQEGLWEAARSGKAHILDQLLRRGAEINA, YGNTALQWASYYNKPRCVERLLLGGARLDL, DNVNALGDAARSGSAEPLKLLVDVGVDVNA, GGDTALCRAIWAEEVECVSVLLQGGAKFIL, RFENLLTFAVQVSSPEILRLLLKAPEERDL, SGWTILHLAAVHGTLAGLTKVLDHATGRAA, QNMLASAWMDTERSLKLLGILLEAGVSLTP, RHGTALHTAALFSPKPLVEKVIETSRMLAD, MGRNAVHLAAAAGARSVLEKIFEVEENEDL, DGWTPFHWACRGEDDDCARFLIEKARKIFD, and KTWTPLDVARFHQRREVELLLSLGMTTSD.

It participates in mycotoxin biosynthesis. Functionally, ankyrin repeat domain-containing protein; part of the satratoxin SC1 cluster involved in the biosynthesis of satratoxins, trichothecene mycotoxins that are associated with human food poisonings. Satratoxins are suggested to be made by products of multiple gene clusters (SC1, SC2 and SC3) that encode 21 proteins in all, including polyketide synthases, acetyltransferases, and other enzymes expected to modify the trichothecene skeleton. SC1 encodes 10 proteins, SAT1 to SAT10. The largest are SAT8, which encodes a putative polyketide synthase (PKS) with a conventional non-reducing architecture, and SAT10, a putative protein containing four ankyrin repeats and thus may be involved in protein scaffolding. The putative short-chain reductase SAT3 may assist the PKS in some capacity. SAT6 contains a secretory lipase domain and acts probably as a trichothecene esterase. SAT5 encodes a putative acetyltransferase, and so, with SAT6, may affect endogenous protection from toxicity. The probable transcription factor SAT9 may regulate the expression of the SC1 cluster. SC2 encodes proteins SAT11 to SAT16, the largest of which encodes the putative reducing PKS SAT13. SAT11 is a cytochrome P450 monooxygenase, while SAT14 and SAT16 are probable acetyltransferases. The SC2 cluster may be regulated by the transcription factor SAT15. SC3 is a small cluster that encodes 5 proteins, SAT17 to SAT21. SAT21 is a putative MFS-type transporter which may have a role in exporting secondary metabolites. The four other proteins putatively encoded in SC3 include the taurine hydroxylase-like protein SAT17, the O-methyltransferase SAT18, the acetyltransferase SAT19, and the Cys6-type zinc finger SAT20, the latter being probably involved in regulation of SC3 expression. The sequence is that of Ankyrin repeat domain-containing protein SAT10 from Stachybotrys chartarum (strain CBS 109288 / IBT 7711) (Toxic black mold).